A 365-amino-acid polypeptide reads, in one-letter code: UDP-N-acetylglucosamine--N-acetylmuramyl-(pentapeptide) pyrophosphoryl-undecaprenol N-acetylglucosamine transferase (365 aa).

Residues 10 to 12 (TGG), Asn-124, Arg-165, Ser-193, Ile-248, and Gln-293 each bind UDP-N-acetyl-alpha-D-glucosamine.

It belongs to the glycosyltransferase 28 family. MurG subfamily.

The protein resides in the cell inner membrane. It carries out the reaction di-trans,octa-cis-undecaprenyl diphospho-N-acetyl-alpha-D-muramoyl-L-alanyl-D-glutamyl-meso-2,6-diaminopimeloyl-D-alanyl-D-alanine + UDP-N-acetyl-alpha-D-glucosamine = di-trans,octa-cis-undecaprenyl diphospho-[N-acetyl-alpha-D-glucosaminyl-(1-&gt;4)]-N-acetyl-alpha-D-muramoyl-L-alanyl-D-glutamyl-meso-2,6-diaminopimeloyl-D-alanyl-D-alanine + UDP + H(+). Its pathway is cell wall biogenesis; peptidoglycan biosynthesis. Functionally, cell wall formation. Catalyzes the transfer of a GlcNAc subunit on undecaprenyl-pyrophosphoryl-MurNAc-pentapeptide (lipid intermediate I) to form undecaprenyl-pyrophosphoryl-MurNAc-(pentapeptide)GlcNAc (lipid intermediate II). This Geotalea uraniireducens (strain Rf4) (Geobacter uraniireducens) protein is UDP-N-acetylglucosamine--N-acetylmuramyl-(pentapeptide) pyrophosphoryl-undecaprenol N-acetylglucosamine transferase.